Here is a 302-residue protein sequence, read N- to C-terminus: Negative regulator of the PHO system (302 aa).

In terms of domain architecture, Protein kinase spans 6 to 296; the sequence is FKQLEKLGNG…AKQALLHPWF (291 aa). Residues 12-20 and K35 each bind ATP; that span reads LGNGTYATV. D132 (proton acceptor) is an active-site residue.

Belongs to the protein kinase superfamily. CMGC Ser/Thr protein kinase family. CDC2/CDKX subfamily. In terms of assembly, interacts with a number of cyclins.

It carries out the reaction L-seryl-[protein] + ATP = O-phospho-L-seryl-[protein] + ADP + H(+). The enzyme catalyses L-threonyl-[protein] + ATP = O-phospho-L-threonyl-[protein] + ADP + H(+). Its function is as follows. When phosphate concentrations are high it phosphorylates the PHO4 transcription factor thus establishing repression. The chain is Negative regulator of the PHO system (PHO85) from Candida glabrata (strain ATCC 2001 / BCRC 20586 / JCM 3761 / NBRC 0622 / NRRL Y-65 / CBS 138) (Yeast).